The following is a 452-amino-acid chain: Keratin, type II cytoskeletal 80 (452 aa).

A head region spans residues 1–82 (MAYRSCVVGF…DPAVQQQKNQ (82 aa)). S45 is subject to Phosphoserine. The interval 82-118 (QEKEEMKVLNDKFASLIGKVQALEQRNQLLETRWGFL) is coil 1A. The IF rod domain occupies 83-394 (EKEEMKVLND…KLMEGEESRM (312 aa)). The interval 119 to 135 (QGQGSATFDLSHHYETF) is linker 1. The segment at 136-227 (QGRLQEELRK…TVYEQELKDL (92 aa)) is coil 1B. Residues 228-251 (TAQVKDVSVTVGLDSRCHIDLSGI) are linker 12. Positions 252 to 390 (VEEVKAQYDA…ATYHKLMEGE (139 aa)) are coil 2. Residues 391–452 (ESRMDLPSTT…YLSQESEASE (62 aa)) are tail. Composition is skewed to polar residues over residues 411–421 (TTASKSGLSKT) and 443–452 (YLSQESEASE). The disordered stretch occupies residues 411–452 (TTASKSGLSKTPSRKKKNRGGPVIKITEMSEKYLSQESEASE).

This sequence belongs to the intermediate filament family. As to quaternary structure, heterotetramer of two type I and two type II keratins.

The protein is Keratin, type II cytoskeletal 80 (Krt80) of Rattus norvegicus (Rat).